We begin with the raw amino-acid sequence, 1216 residues long: ATP-dependent helicase/nuclease subunit A (1216 aa).

A UvrD-like helicase ATP-binding domain is found at 26–488 (QKKTAEQIEA…ILLKENFRSS (463 aa)). 47–54 (ASAGSGKT) provides a ligand contact to ATP. The region spanning 515 to 802 (KHQLVFANTK…ELMTIHKSKG (288 aa)) is the UvrD-like helicase C-terminal domain.

The protein belongs to the helicase family. AddA subfamily. As to quaternary structure, heterodimer of AddA and AddB/RexB. The cofactor is Mg(2+).

It catalyses the reaction Couples ATP hydrolysis with the unwinding of duplex DNA by translocating in the 3'-5' direction.. The catalysed reaction is ATP + H2O = ADP + phosphate + H(+). In terms of biological role, the heterodimer acts as both an ATP-dependent DNA helicase and an ATP-dependent, dual-direction single-stranded exonuclease. Recognizes the chi site generating a DNA molecule suitable for the initiation of homologous recombination. The AddA nuclease domain is required for chi fragment generation; this subunit has the helicase and 3' -&gt; 5' nuclease activities. This is ATP-dependent helicase/nuclease subunit A from Streptococcus pneumoniae (strain Hungary19A-6).